The primary structure comprises 400 residues: Na(+)/H(+) antiporter NhaA (400 aa).

12 consecutive transmembrane segments (helical) span residues 26–46, 71–91, 107–127, 137–157, 166–186, 189–209, 212–232, 233–253, 273–293, 299–319, 340–360, and 373–393; these read AGGI…NSPL, LIHW…GMEV, IFPA…YWFI, GWAI…ALLS, IFLL…IALF, HGLS…LILL, FKVS…ASVL, KSGV…PLKG, FVIL…GIDV, PLLL…IFGF, IFAV…LASL, and LSRL…YLFL.

It belongs to the NhaA Na(+)/H(+) (TC 2.A.33) antiporter family.

The protein resides in the cell inner membrane. The enzyme catalyses Na(+)(in) + 2 H(+)(out) = Na(+)(out) + 2 H(+)(in). Its function is as follows. Na(+)/H(+) antiporter that extrudes sodium in exchange for external protons. In Haemophilus influenzae (strain PittGG), this protein is Na(+)/H(+) antiporter NhaA.